A 253-amino-acid polypeptide reads, in one-letter code: Phosphate import ATP-binding protein PstB (253 aa).

The 242-residue stretch at 7 to 248 (IDARDVNFWY…PEKEATQNYI (242 aa)) folds into the ABC transporter domain. Residue 39–46 (GPSGCGKS) coordinates ATP.

It belongs to the ABC transporter superfamily. Phosphate importer (TC 3.A.1.7) family. In terms of assembly, the complex is composed of two ATP-binding proteins (PstB), two transmembrane proteins (PstC and PstA) and a solute-binding protein (PstS).

It localises to the cell inner membrane. It carries out the reaction phosphate(out) + ATP + H2O = ADP + 2 phosphate(in) + H(+). In terms of biological role, part of the ABC transporter complex PstSACB involved in phosphate import. Responsible for energy coupling to the transport system. This is Phosphate import ATP-binding protein PstB from Bacteroides fragilis (strain ATCC 25285 / DSM 2151 / CCUG 4856 / JCM 11019 / LMG 10263 / NCTC 9343 / Onslow / VPI 2553 / EN-2).